Here is a 380-residue protein sequence, read N- to C-terminus: Dynactin subunit 2 (380 aa).

The segment at 1–32 (MADPKFQNLPGIAYDQPDVYETPDDPELDTSD) is disordered. A compositionally biased stretch (acidic residues) spans 21-32 (ETPDDPELDTSD). Residues Ser-49, Ser-58, and Ser-86 each carry the phosphoserine modification. 2 coiled-coil regions span residues 100–135 (VQKC…QSYD) and 353–377 (ETFA…AAIS).

Belongs to the dynactin subunit 2 family. As to quaternary structure, subunit of dynactin, a multiprotein complex associated with dynein.

Its subcellular location is the cytoplasm. It localises to the cytoskeleton. The protein localises to the membrane. Modulates cytoplasmic dynein binding to an organelle, and plays a role in prometaphase chromosome alignment and spindle organization during mitosis. May play a role in synapse formation during brain development. This is Dynactin subunit 2 from Drosophila melanogaster (Fruit fly).